The chain runs to 287 residues: Leucine-rich repeat-containing protein 72 (287 aa).

LRR repeat units follow at residues 46 to 67 (DVFE…SRFK), 68 to 89 (KLKY…TRNY), 90 to 111 (CLTE…HYLP), and 112 to 133 (SLHI…VKEL). The LRRCT domain occupies 147 to 185 (NPLCQYNLYRLYIIYHLPGVELLDRNQVTEKERRSMITI).

This chain is Leucine-rich repeat-containing protein 72 (LRRC72), found in Homo sapiens (Human).